The following is a 111-amino-acid chain: Phosphoribosyl-ATP pyrophosphatase (111 aa).

Belongs to the PRA-PH family.

The protein localises to the cytoplasm. The catalysed reaction is 1-(5-phospho-beta-D-ribosyl)-ATP + H2O = 1-(5-phospho-beta-D-ribosyl)-5'-AMP + diphosphate + H(+). It functions in the pathway amino-acid biosynthesis; L-histidine biosynthesis; L-histidine from 5-phospho-alpha-D-ribose 1-diphosphate: step 2/9. In Pseudomonas putida (strain GB-1), this protein is Phosphoribosyl-ATP pyrophosphatase.